Reading from the N-terminus, the 396-residue chain is Ribosomal RNA large subunit methyltransferase I (396 aa).

Residues 2–79 form the PUA domain; that stretch reads SVFIYLVKGR…KEETVDLDFF (78 aa).

It belongs to the methyltransferase superfamily. RlmI family.

It localises to the cytoplasm. It catalyses the reaction cytidine(1962) in 23S rRNA + S-adenosyl-L-methionine = 5-methylcytidine(1962) in 23S rRNA + S-adenosyl-L-homocysteine + H(+). Its function is as follows. Specifically methylates the cytosine at position 1962 (m5C1962) of 23S rRNA. The polypeptide is Ribosomal RNA large subunit methyltransferase I (Aeromonas salmonicida (strain A449)).